Here is a 75-residue protein sequence, read N- to C-terminus: UPF0154 protein MMOB4450 (75 aa).

A helical membrane pass occupies residues 7–27 (IGLIVGLSILFTIVGLVVGFF).

Belongs to the UPF0154 family.

It is found in the cell membrane. This Mycoplasma mobile (strain ATCC 43663 / 163K / NCTC 11711) (Mesomycoplasma mobile) protein is UPF0154 protein MMOB4450.